The chain runs to 256 residues: Protein FixA (256 aa).

This sequence belongs to the ETF beta-subunit/FixA family. Heterodimer of FixA and FixB.

It participates in amine and polyamine metabolism; carnitine metabolism. Functionally, required for anaerobic carnitine reduction. May bring reductant to CaiA. This chain is Protein FixA, found in Escherichia coli O17:K52:H18 (strain UMN026 / ExPEC).